Reading from the N-terminus, the 483-residue chain is CdaA regulatory protein CdaR (483 aa).

A helical membrane pass occupies residues 9–26 (WAVKIIALLFALLLYVAV). YbbR-like domains lie at 55-135 (IPVK…TVTI), 143-228 (FPVE…KITV), 237-316 (VPFK…TLHI), and 329-394 (VPIK…VNGP). Residues 410–483 (LTSKKSNTST…STANSQSSSE (74 aa)) are disordered. A compositionally biased stretch (low complexity) spans 413–430 (KKSNTSTNDNSSNTSGNQ). Over residues 431 to 454 (DTDKQTNDQKNNQQEDTKNTDKNN) the composition is skewed to basic and acidic residues.

Interacts with CdaA.

The protein resides in the cell membrane. Upon coexpression in E.coli stimulates the diadenylate cyclase activity of CdaA about 20-fold. In B.subtilis c-di-AMP is a second messenger that mediates growth, DNA repair and cell wall homeostasis; it is toxic when present in excess. This chain is CdaA regulatory protein CdaR, found in Bacillus subtilis (strain 168).